The chain runs to 141 residues: Large ribosomal subunit protein uL11 (141 aa).

This sequence belongs to the universal ribosomal protein uL11 family. Part of the ribosomal stalk of the 50S ribosomal subunit. Interacts with L10 and the large rRNA to form the base of the stalk. L10 forms an elongated spine to which L12 dimers bind in a sequential fashion forming a multimeric L10(L12)X complex. In terms of processing, one or more lysine residues are methylated.

Functionally, forms part of the ribosomal stalk which helps the ribosome interact with GTP-bound translation factors. This chain is Large ribosomal subunit protein uL11, found in Streptococcus gordonii (strain Challis / ATCC 35105 / BCRC 15272 / CH1 / DL1 / V288).